A 234-amino-acid polypeptide reads, in one-letter code: Leucyl/phenylalanyl-tRNA--protein transferase (234 aa).

It belongs to the L/F-transferase family.

It localises to the cytoplasm. It catalyses the reaction N-terminal L-lysyl-[protein] + L-leucyl-tRNA(Leu) = N-terminal L-leucyl-L-lysyl-[protein] + tRNA(Leu) + H(+). The enzyme catalyses N-terminal L-arginyl-[protein] + L-leucyl-tRNA(Leu) = N-terminal L-leucyl-L-arginyl-[protein] + tRNA(Leu) + H(+). The catalysed reaction is L-phenylalanyl-tRNA(Phe) + an N-terminal L-alpha-aminoacyl-[protein] = an N-terminal L-phenylalanyl-L-alpha-aminoacyl-[protein] + tRNA(Phe). Its function is as follows. Functions in the N-end rule pathway of protein degradation where it conjugates Leu, Phe and, less efficiently, Met from aminoacyl-tRNAs to the N-termini of proteins containing an N-terminal arginine or lysine. In Pectobacterium carotovorum subsp. carotovorum (strain PC1), this protein is Leucyl/phenylalanyl-tRNA--protein transferase.